The chain runs to 99 residues: Acylphosphatase (99 aa).

The region spanning 5–97 (IRQVMISGRV…QPGERFSILS (93 aa)) is the Acylphosphatase-like domain. Residues arginine 20 and asparagine 38 contribute to the active site.

The protein belongs to the acylphosphatase family.

The catalysed reaction is an acyl phosphate + H2O = a carboxylate + phosphate + H(+). The chain is Acylphosphatase (acyP) from Rhodopseudomonas palustris (strain ATCC BAA-98 / CGA009).